Here is a 246-residue protein sequence, read N- to C-terminus: Pyridoxine 5'-phosphate synthase (246 aa).

N12 provides a ligand contact to 3-amino-2-oxopropyl phosphate. A 1-deoxy-D-xylulose 5-phosphate-binding site is contributed by 14 to 15; the sequence is DH. 3-amino-2-oxopropyl phosphate is bound at residue R23. H48 acts as the Proton acceptor in catalysis. Residues R50 and H55 each coordinate 1-deoxy-D-xylulose 5-phosphate. The active-site Proton acceptor is the E75. T105 provides a ligand contact to 1-deoxy-D-xylulose 5-phosphate. Catalysis depends on H196, which acts as the Proton donor. 3-amino-2-oxopropyl phosphate-binding positions include G197 and 218–219; that span reads GH.

Belongs to the PNP synthase family. Homooctamer; tetramer of dimers.

It is found in the cytoplasm. The catalysed reaction is 3-amino-2-oxopropyl phosphate + 1-deoxy-D-xylulose 5-phosphate = pyridoxine 5'-phosphate + phosphate + 2 H2O + H(+). It participates in cofactor biosynthesis; pyridoxine 5'-phosphate biosynthesis; pyridoxine 5'-phosphate from D-erythrose 4-phosphate: step 5/5. In terms of biological role, catalyzes the complicated ring closure reaction between the two acyclic compounds 1-deoxy-D-xylulose-5-phosphate (DXP) and 3-amino-2-oxopropyl phosphate (1-amino-acetone-3-phosphate or AAP) to form pyridoxine 5'-phosphate (PNP) and inorganic phosphate. The sequence is that of Pyridoxine 5'-phosphate synthase from Pseudomonas putida (strain GB-1).